Reading from the N-terminus, the 316-residue chain is Transaldolase A (316 aa).

The Schiff-base intermediate with substrate role is filled by Lys-131.

This sequence belongs to the transaldolase family. Type 1 subfamily. Homodimer.

The protein localises to the cytoplasm. It catalyses the reaction D-sedoheptulose 7-phosphate + D-glyceraldehyde 3-phosphate = D-erythrose 4-phosphate + beta-D-fructose 6-phosphate. It functions in the pathway carbohydrate degradation; pentose phosphate pathway; D-glyceraldehyde 3-phosphate and beta-D-fructose 6-phosphate from D-ribose 5-phosphate and D-xylulose 5-phosphate (non-oxidative stage): step 2/3. Its function is as follows. Transaldolase is important for the balance of metabolites in the pentose-phosphate pathway. This Shigella flexneri protein is Transaldolase A.